Consider the following 908-residue polypeptide: MQTHEIRKRFLDHFVKAGHTEVPSASVILDDPNLLFVNAGMVQFVPFFLGQCTPPYATATSIQKCIRTPDIDDVGITTRHNTFFQMAGNFSFGDYFKRGAIELAWALLTNSFADGGYGLDPERLWATVYLDDDEAAGLWQEIAGLPPERIQRRGMADNYWSMGIPGPCGPSSEIYYDRGPEFGPEGGPIVNEDRYLEVWNLVFMQNERGEGTTKEDYEIRGPLPRKNIDTGMGVERIALVLQGVHNVYEIDLLRPVIDLVATRAPRPYDPENEDTNHADNVRYRIIADHSRTAAILIGDGVSPVNDGRGYVLRRLLRRIIRSAKLLGIDSPIVGDLMATVCNAMGRAYPGLVTDFDRINRIAVAEETAFNRTLTSGSKLFDDVVGATVASGSTVVAGLDAFTLHDTYGFPIELTLEMAAEAGLTVDEKGFHELMLQQRQRAKVDAAARKQAHVDLTAYRELVDAGPTEFTGFDELTTEARILGIFVEGKRVPVVAHAVRGQAGITNRVELVLDRTPLYAESGGQIADAGTISGIGAGASSRAAVTDVQKIAKTLHVHRVNLESGEFVEGDTVVAVVDPGWRRGAAQGHSGTHIVHAALRQVLGPNAVQAGSLNRPGYLRFDFNWQGSLTGEQRTQIEEVTNEAVQADFEVHTFTEKLDTAKAMGAIALFGEAYPDEVRVVEMGGPFSLELCGGTHVHNTAQIGPVTILGESSIGSGVRRVEAYVGLDSFRHLAKERALMAGLASSLQVPSEEVHARVATLVERLKAAEKELERARQANVQAAATKAAAGAEWIGNVRVVVQRMSGPIAPDDLRFLVGDIRGKLGSDPAVVALIAVTSDGPTATVPYAVAANPAAQDLGIRANDLVEQLAMVVDGRGGGKADLAQGSGKDPTGIDAALDTVRAQIAQVG.

Residues His-588, His-592, Cys-691, and His-695 each contribute to the Zn(2+) site.

This sequence belongs to the class-II aminoacyl-tRNA synthetase family. The cofactor is Zn(2+).

It is found in the cytoplasm. The catalysed reaction is tRNA(Ala) + L-alanine + ATP = L-alanyl-tRNA(Ala) + AMP + diphosphate. Functionally, catalyzes the attachment of alanine to tRNA(Ala) in a two-step reaction: alanine is first activated by ATP to form Ala-AMP and then transferred to the acceptor end of tRNA(Ala). Also edits incorrectly charged Ser-tRNA(Ala) and Gly-tRNA(Ala) via its editing domain. The chain is Alanine--tRNA ligase from Mycobacterium leprae (strain TN).